The primary structure comprises 66 residues: Cold shock protein 1 (66 aa).

A CSD domain is found at 4–63 (GTVKWFNADKGYGFITGEDGNDVFVHFSAIQTDGFKTLEEGQKVTFDEESSDRGPQAANV). Positions 47–66 (VTFDEESSDRGPQAANVVPQ) are disordered.

It is found in the cytoplasm. In Lactiplantibacillus plantarum (strain ATCC BAA-793 / NCIMB 8826 / WCFS1) (Lactobacillus plantarum), this protein is Cold shock protein 1 (csp).